A 1752-amino-acid polypeptide reads, in one-letter code: Serine protease/ABC transporter B family protein tagA (1752 aa).

Residues 1–24 (MNKKLFIFGLSLFLFLFIFNLSLS) form the signal peptide. An N-linked (GlcNAc...) asparagine glycan is attached at Asn20. The Peptidase S8 domain maps to 280-696 (HYSIQSGSAS…FGNIQLSKLI (417 aa)). Active-site charge relay system residues include Asp312 and His352. Asn400 and Asn557 each carry an N-linked (GlcNAc...) asparagine glycan. The Charge relay system role is filled by Ser625. N-linked (GlcNAc...) asparagine glycans are attached at residues Asn653, Asn785, and Asn823. A helical transmembrane segment spans residues 909–929 (IVLLGIFGIIIVGAVIFVLVC). The interval 946–1032 (DKGGDGNSIR…QNNSPQYDED (87 aa)) is disordered. Positions 962-994 (NNNNNNNNNNNNNNNNNNNNNNNNNNNNNNNNN) are enriched in low complexity. A glycan (N-linked (GlcNAc...) asparagine) is linked at Asn993. Residues 995-1004 (SNGKQSNIEL) show a composition bias toward polar residues. The segment covering 1013-1028 (GTPNGDDQQQQNNSPQ) has biased composition (low complexity). The next 6 helical transmembrane spans lie at 1058 to 1078 (ILGL…AVPL), 1102 to 1122 (FALI…LLAL), 1174 to 1194 (IPHM…LFII), 1200 to 1220 (LVVL…GGYI), 1285 to 1305 (TSGI…SSLV), and 1315 to 1335 (LIAF…VASL). The ABC transmembrane type-1 domain maps to 1059–1341 (LGLALFLSFI…VASLYTTYKS (283 aa)). The region spanning 1374–1610 (IQFNKVSFAY…KGMFYDFVQI (237 aa)) is the ABC transporter domain. 1409-1416 (GPSGGGKS) lines the ATP pocket. A disordered region spans residues 1621 to 1686 (IQLPSNSRNT…SRSPPPMWRQ (66 aa)). A compositionally biased stretch (basic and acidic residues) spans 1631-1642 (RNADKLRNRSET). Asn1638, Asn1670, and Asn1694 each carry an N-linked (GlcNAc...) asparagine glycan.

In the C-terminal section; belongs to the ABC transporter superfamily. ABCB family. Multidrug resistance exporter (TC 3.A.1.201) subfamily. The protein in the N-terminal section; belongs to the peptidase S8 family.

It localises to the membrane. Its function is as follows. Required for a general cell fate determination at the onset of development. Required for the specification of an initial population of prespore cells in which tagA is expressed. Required for normal SDF-2 signaling during spore encapsulation. The chain is Serine protease/ABC transporter B family protein tagA (tagA) from Dictyostelium discoideum (Social amoeba).